A 421-amino-acid chain; its full sequence is Histidine--tRNA ligase (421 aa).

The protein belongs to the class-II aminoacyl-tRNA synthetase family. As to quaternary structure, homodimer.

Its subcellular location is the cytoplasm. It catalyses the reaction tRNA(His) + L-histidine + ATP = L-histidyl-tRNA(His) + AMP + diphosphate + H(+). The polypeptide is Histidine--tRNA ligase (Francisella tularensis subsp. novicida (strain U112)).